The sequence spans 305 residues: Translation initiation factor eIF2B subunit alpha (305 aa).

An N6-acetyllysine modification is found at K35.

Belongs to the eIF-2B alpha/beta/delta subunits family. Component of the translation initiation factor 2B (eIF2B) complex which is a heterodecamer of two sets of five different subunits: alpha, beta, gamma, delta and epsilon. Subunits alpha, beta and delta comprise a regulatory subcomplex and subunits epsilon and gamma comprise a catalytic subcomplex. Within the complex, the hexameric regulatory complex resides at the center, with the two heterodimeric catalytic subcomplexes bound on opposite sides.

It is found in the cytoplasm. The protein localises to the cytosol. Its activity is regulated as follows. Activated by the chemical integrated stress response (ISR) inhibitor ISRIB which stimulates guanine nucleotide exchange factor activity for both phosphorylated and unphosphorylated eIF2. In terms of biological role, acts as a component of the translation initiation factor 2B (eIF2B) complex, which catalyzes the exchange of GDP for GTP on eukaryotic initiation factor 2 (eIF2) gamma subunit. Its guanine nucleotide exchange factor activity is repressed when bound to eIF2 complex phosphorylated on the alpha subunit, thereby limiting the amount of methionyl-initiator methionine tRNA available to the ribosome and consequently global translation is repressed. The sequence is that of Translation initiation factor eIF2B subunit alpha (Eif2b1) from Mus musculus (Mouse).